The following is a 466-amino-acid chain: Alpha-1A adrenergic receptor (466 aa).

Topologically, residues 1–27 (MVFLSGNASDSSNCTQPPAPVNISKAI) are extracellular. N-linked (GlcNAc...) asparagine glycans are attached at residues Asn7, Asn13, and Asn22. A helical membrane pass occupies residues 28–51 (LLGVILGGLILFGVLGNILVILSV). Residues 52–64 (ACHRHLHSVTHYY) are Cytoplasmic-facing. The helical transmembrane segment at 65 to 88 (IVNLAVADLLLTSTVLPFSAIFEV) threads the bilayer. Over 89–99 (LGYWAFGRVFC) the chain is Extracellular. Cys99 and Cys176 form a disulfide bridge. The helical transmembrane segment at 100-122 (NIWAAVDVLCCTASIMGLCIISI) threads the bilayer. Over 123–143 (DRYIGVSYPLRYPTIVTQRRG) the chain is Cytoplasmic. The helical transmembrane segment at 144–167 (LMALLCVWALSLVISIGPLFGWRQ) threads the bilayer. Over 168-181 (PAPEDETICQINEE) the chain is Extracellular. Residues 182–205 (PGYVLFSALGSFYLPLAIILVMYC) traverse the membrane as a helical segment. The Cytoplasmic segment spans residues 206–273 (RVYVVAKRES…FSREKKAAKT (68 aa)). Position 215 is a phosphoserine; by PKA (Ser215). Residues 274–297 (LGIVVGCFVLCWLPFFLVMPIGSF) form a helical membrane-spanning segment. Topologically, residues 298–305 (FPDFKPSE) are extracellular. The helical transmembrane segment at 306–329 (TVFKIVFWLGYLNSCINPIIYPCS) threads the bilayer. Topologically, residues 330-466 (SQEFKKAFQN…ISLSENGEEV (137 aa)) are cytoplasmic. A Nuclear localization signal motif is present at residues 334–349 (KKAFQNVLRIQCLCRK). Cys345 carries the S-palmitoyl cysteine lipid modification.

This sequence belongs to the G-protein coupled receptor 1 family. Adrenergic receptor subfamily. ADRA1A sub-subfamily. As to quaternary structure, homo- and heterooligomer. Heterooligomerizes with ADRA1B homooligomers in cardiac myocytes. Interacts with CAVIN4. Post-translationally, C-terminal Ser or Thr residues may be phosphorylated. In terms of tissue distribution, expressed in heart, brain, liver and prostate, but not in kidney, lung, adrenal, aorta and pituitary. Within the prostate, expressed in the apex, base, periurethral and lateral lobe. Isoform 4 is the most abundant isoform expressed in the prostate with high levels also detected in liver and heart.

It is found in the nucleus membrane. The protein resides in the cell membrane. It localises to the cytoplasm. The protein localises to the membrane. Its subcellular location is the caveola. This alpha-adrenergic receptor mediates its action by association with G proteins that activate a phosphatidylinositol-calcium second messenger system. Its effect is mediated by G(q) and G(11) proteins. Nuclear ADRA1A-ADRA1B heterooligomers regulate phenylephrine(PE)-stimulated ERK signaling in cardiac myocytes. This is Alpha-1A adrenergic receptor (ADRA1A) from Homo sapiens (Human).